Here is a 172-residue protein sequence, read N- to C-terminus: Shikimate kinase (172 aa).

14-19 (GAGKST) is an ATP binding site. Residue S18 participates in Mg(2+) binding. 3 residues coordinate substrate: D36, R60, and G82. Residue R120 coordinates ATP. R139 lines the substrate pocket. Q156 serves as a coordination point for ATP.

The protein belongs to the shikimate kinase family. As to quaternary structure, monomer. It depends on Mg(2+) as a cofactor.

It localises to the cytoplasm. It carries out the reaction shikimate + ATP = 3-phosphoshikimate + ADP + H(+). The protein operates within metabolic intermediate biosynthesis; chorismate biosynthesis; chorismate from D-erythrose 4-phosphate and phosphoenolpyruvate: step 5/7. In terms of biological role, catalyzes the specific phosphorylation of the 3-hydroxyl group of shikimic acid using ATP as a cosubstrate. This Vibrio campbellii (strain ATCC BAA-1116) protein is Shikimate kinase.